Consider the following 715-residue polypeptide: Polyribonucleotide nucleotidyltransferase (715 aa).

Positions 485 and 491 each coordinate Mg(2+). Residues 552–611 (PRIHTMKIDPKKIKDVIGKGGAVIRALTEETGTSIDIDDDGTVKIAATDNNAAKAVMARI) enclose the KH domain. The region spanning 621–689 (NAIYKGKVTR…RQNRIRLTMK (69 aa)) is the S1 motif domain. Positions 695–715 (TPVAENVTEEAEVSSEQQAEI) are disordered.

It belongs to the polyribonucleotide nucleotidyltransferase family. As to quaternary structure, component of the RNA degradosome, which is a multiprotein complex involved in RNA processing and mRNA degradation. It depends on Mg(2+) as a cofactor.

The protein resides in the cytoplasm. It carries out the reaction RNA(n+1) + phosphate = RNA(n) + a ribonucleoside 5'-diphosphate. In terms of biological role, involved in mRNA degradation. Catalyzes the phosphorolysis of single-stranded polyribonucleotides processively in the 3'- to 5'-direction. The protein is Polyribonucleotide nucleotidyltransferase of Actinobacillus pleuropneumoniae serotype 7 (strain AP76).